The chain runs to 471 residues: Zinc finger protein 385B (471 aa).

The required for induction of apoptosis stretch occupies residues 1–93; the sequence is MNMANFLRGF…TGSTCHTTTL (93 aa). A Matrin-type 1 zinc finger spans residues 34-64; the sequence is SFCEVCNIQLNSAAQAQVHSNGKSHRKRVKQ. 2 disordered regions span residues 50–92 and 175–275; these read QVHS…HTTT and HYKG…TVVE. The segment covering 76–92 has biased composition (low complexity); that stretch reads ASPSSNSSTGSTCHTTT. Residues 94–471 are interaction with p53/TP53; sequence PALVRTPTLM…TPASILFAPY (378 aa). The segment at 157 to 187 adopts a Matrin-type 2 zinc-finger fold; the sequence is ISCNVCQLRFNSDSQAEAHYKGSKHAKKVKA. Residues 206 to 220 show a composition bias toward polar residues; sequence ANPSCSITPITGNNS. Positions 230-250 are enriched in low complexity; the sequence is KASSSSQPSSSESGSFLLKSG. Residues 260 to 269 show a composition bias toward polar residues; it reads TSPSKSTNGA. The segment at 282-316 adopts a Matrin-type 3 zinc-finger fold; it reads KKLLYCSLCKVAVNSLSQLEAHNTGSKHKTMVEAR. The segment at 318-340 is disordered; it reads GAGPIKSYPRPGSRLKMQNGSKG. The Matrin-type 4 zinc finger occupies 348–378; the sequence is FHCEICDVHVNSEIQLKQHISSRRHKDRVAG.

In terms of assembly, interacts with p53/TP53; the interaction is direct. As to expression, detected in germinal center of lymph node (at protein level). Expressed in spleen, lymph node and tonsil.

It is found in the nucleus. May play a role in p53/TP53-mediated apoptosis. This Homo sapiens (Human) protein is Zinc finger protein 385B (ZNF385B).